The primary structure comprises 479 residues: Aspartyl/glutamyl-tRNA(Asn/Gln) amidotransferase subunit B (479 aa).

The protein belongs to the GatB/GatE family. GatB subfamily. As to quaternary structure, heterotrimer of A, B and C subunits.

It carries out the reaction L-glutamyl-tRNA(Gln) + L-glutamine + ATP + H2O = L-glutaminyl-tRNA(Gln) + L-glutamate + ADP + phosphate + H(+). The catalysed reaction is L-aspartyl-tRNA(Asn) + L-glutamine + ATP + H2O = L-asparaginyl-tRNA(Asn) + L-glutamate + ADP + phosphate + 2 H(+). Its function is as follows. Allows the formation of correctly charged Asn-tRNA(Asn) or Gln-tRNA(Gln) through the transamidation of misacylated Asp-tRNA(Asn) or Glu-tRNA(Gln) in organisms which lack either or both of asparaginyl-tRNA or glutaminyl-tRNA synthetases. The reaction takes place in the presence of glutamine and ATP through an activated phospho-Asp-tRNA(Asn) or phospho-Glu-tRNA(Gln). In Deinococcus radiodurans (strain ATCC 13939 / DSM 20539 / JCM 16871 / CCUG 27074 / LMG 4051 / NBRC 15346 / NCIMB 9279 / VKM B-1422 / R1), this protein is Aspartyl/glutamyl-tRNA(Asn/Gln) amidotransferase subunit B.